Here is a 565-residue protein sequence, read N- to C-terminus: Sulfite reductase [NADPH] hemoprotein beta-component (565 aa).

[4Fe-4S] cluster is bound by residues cysteine 429, cysteine 435, cysteine 474, and cysteine 478. Cysteine 478 provides a ligand contact to siroheme.

It belongs to the nitrite and sulfite reductase 4Fe-4S domain family. As to quaternary structure, alpha(8)-beta(8). The alpha component is a flavoprotein, the beta component is a hemoprotein. Siroheme is required as a cofactor. Requires [4Fe-4S] cluster as cofactor.

The enzyme catalyses hydrogen sulfide + 3 NADP(+) + 3 H2O = sulfite + 3 NADPH + 4 H(+). It functions in the pathway sulfur metabolism; hydrogen sulfide biosynthesis; hydrogen sulfide from sulfite (NADPH route): step 1/1. Component of the sulfite reductase complex that catalyzes the 6-electron reduction of sulfite to sulfide. This is one of several activities required for the biosynthesis of L-cysteine from sulfate. The polypeptide is Sulfite reductase [NADPH] hemoprotein beta-component (Shewanella oneidensis (strain ATCC 700550 / JCM 31522 / CIP 106686 / LMG 19005 / NCIMB 14063 / MR-1)).